A 210-amino-acid polypeptide reads, in one-letter code: Na(+)-translocating NADH-quinone reductase subunit D (210 aa).

Helical transmembrane passes span 42-62, 72-92, 103-123, 131-151, and 178-198; these read FVMTLAVTFVTALSNFSVSLI, IIVQMAIIASLVIVVDQVLKA, VFVGLIITNCIVMGRAEAFAM, LIDGIGNGLGYGFVLITVGFF, and NGLMLLAPSAFFLIGFLIWVI.

Belongs to the NqrDE/RnfAE family. Composed of six subunits; NqrA, NqrB, NqrC, NqrD, NqrE and NqrF.

It is found in the cell inner membrane. It catalyses the reaction a ubiquinone + n Na(+)(in) + NADH + H(+) = a ubiquinol + n Na(+)(out) + NAD(+). This reaction is tightly coupled to the Na(+) pumping activity and specifically requires Na(+) for activity. Inhibited by korormicin and 2-N-heptyl-4-hydroxyquinoline N-oxide (HQNO). Its function is as follows. NQR complex catalyzes the reduction of ubiquinone-1 to ubiquinol by two successive reactions, coupled with the transport of Na(+) ions from the cytoplasm to the periplasm. NqrA to NqrE are probably involved in the second step, the conversion of ubisemiquinone to ubiquinol. This chain is Na(+)-translocating NADH-quinone reductase subunit D, found in Vibrio alginolyticus.